The primary structure comprises 371 residues: Peptidyl-prolyl cis-trans isomerase D (371 aa).

The region spanning 8–172 (FFDIAIGGQL…EPVVIADCGQ (165 aa)) is the PPIase cyclophilin-type domain. The interval 175-202 (SDDPFLAERTSTDGDPYEDYPDDEDQEL) is disordered. The segment covering 189-201 (DPYEDYPDDEDQE) has biased composition (acidic residues). 3 TPR repeats span residues 212–245 (AKTI…LDVH), 265–303 (APLL…LELS), and 308–341 (AKAY…LPED).

It belongs to the cyclophilin-type PPIase family. PPIase D subfamily.

The protein resides in the cytoplasm. The enzyme catalyses [protein]-peptidylproline (omega=180) = [protein]-peptidylproline (omega=0). PPIases accelerate the folding of proteins. It catalyzes the cis-trans isomerization of proline imidic peptide bonds in oligopeptides. The chain is Peptidyl-prolyl cis-trans isomerase D (Cyp40) from Amanita muscaria (Fly agaric).